A 313-amino-acid polypeptide reads, in one-letter code: Ribosomal RNA small subunit methyltransferase H (313 aa).

Residues 31 to 33, aspartate 51, phenylalanine 77, aspartate 95, and glutamine 102 contribute to the S-adenosyl-L-methionine site; that span reads GGH.

The protein belongs to the methyltransferase superfamily. RsmH family.

The protein localises to the cytoplasm. The enzyme catalyses cytidine(1402) in 16S rRNA + S-adenosyl-L-methionine = N(4)-methylcytidine(1402) in 16S rRNA + S-adenosyl-L-homocysteine + H(+). In terms of biological role, specifically methylates the N4 position of cytidine in position 1402 (C1402) of 16S rRNA. This Xylella fastidiosa (strain 9a5c) protein is Ribosomal RNA small subunit methyltransferase H.